Reading from the N-terminus, the 488-residue chain is GTPase Der (488 aa).

2 EngA-type G domains span residues 3-166 (PVVA…AEAM) and 199-372 (IKLA…DSAT). Residues 9 to 16 (GRPNVGKS), 56 to 60 (DTGGI), 118 to 121 (NKVD), 205 to 212 (GKPNVGKS), 252 to 256 (DTAGV), and 317 to 320 (NKWD) contribute to the GTP site. Residues 373 to 457 (RRVSTSMLTR…PIQLRFQEGD (85 aa)) form the KH-like domain. The disordered stretch occupies residues 469–488 (MSQERRRKRALSHIKDRKTK). Residues 473 to 488 (RRRKRALSHIKDRKTK) are compositionally biased toward basic residues.

This sequence belongs to the TRAFAC class TrmE-Era-EngA-EngB-Septin-like GTPase superfamily. EngA (Der) GTPase family. Associates with the 50S ribosomal subunit.

Its function is as follows. GTPase that plays an essential role in the late steps of ribosome biogenesis. The sequence is that of GTPase Der from Shewanella putrefaciens (strain CN-32 / ATCC BAA-453).